The primary structure comprises 617 residues: Melatonin-related receptor (617 aa).

Residues 1–30 (MGPTLAVPTPYGCIGCKLPQPEYPPALIIF) lie on the Extracellular side of the membrane. The chain crosses the membrane as a helical span at residues 31–51 (MFCAMVITIVVDLIGNSMVIL). Over 52-64 (AVTKNKKLRNSGN) the chain is Cytoplasmic. Residues 65 to 85 (IFVVSLSVADMLVAIYPYPLM) form a helical membrane-spanning segment. The Extracellular segment spans residues 86–103 (LHAMSIGGWDLSQLQCQM). Cysteine 101 and cysteine 178 are joined by a disulfide. Residues 104–124 (VGFITGLSVVGSIFNIVAIAI) form a helical membrane-spanning segment. Topologically, residues 125 to 143 (NRYCYICHSLQYERIFSVR) are cytoplasmic. Residues 144–164 (NTCIYLVITWIMTVLAVLPNM) traverse the membrane as a helical segment. Over 165 to 188 (YIGTIEYDPRTYTCIFNYLNNPVF) the chain is Extracellular. Residues 189 to 209 (TVTIVCIHFVLPLLIVGFCYV) form a helical membrane-spanning segment. At 210–239 (RIWTKVLAARDPAGQNPDNQLAEVRNFLTM) the chain is on the cytoplasmic side. A helical transmembrane segment spans residues 240–260 (FVIFLLFAVCWCPINVLTVLV). Topologically, residues 261 to 273 (AVSPKEMAGKIPN) are extracellular. Residues 274 to 294 (WLYLAAYFIAYFNSCLNAVIY) traverse the membrane as a helical segment. Over 295-617 (GLLNENFRRE…VEDDPDEMAV (323 aa)) the chain is Cytoplasmic. Disordered stretches follow at residues 340–438 (AHAR…ATVY) and 464–596 (SVHF…VTTS). Basic and acidic residues predominate over residues 341 to 353 (HARDQAREQDRAH). Polar residues predominate over residues 485–500 (GSHSKSAFSAATSHPK).

This sequence belongs to the G-protein coupled receptor 1 family. As to quaternary structure, homodimer, and heterodimer with MTNR1A and MTNR1B. Interacts with KAT5. Interacts with RTN4 isoform A/NOGO-A. Interacts with TGFBR1. In terms of assembly, interacts with GTF2I. Cleaved by CAPN1 in a calcium-dependent manner. As to expression, hypothalamus and pituitary.

The protein resides in the cell membrane. It localises to the postsynaptic density. Its subcellular location is the nucleus. In terms of biological role, g protein-coupled receptor that plays a role in numerous physiological processes including regulation of energy metabolism, neurite outgrowth or cell migration. Promotes self-renewal and neuronal differentiation of neural progenitor cells through activation of the NOTCH and WNT/beta-catenin signaling pathways. Modulates the KAT5-dependent glucocorticoid receptor signaling by modulating KAT5 subcellular compartmentalisation. Also plays a role in the activation TGFBR1 in the absence of TGFBR2 by interfering with FKBP1A binding to TGFBR1, leading to induction of both canonical and non-canonical SMAD signaling pathways resulting in inhibition of proliferation or promotion of migration. Upon cleavage by CAPN1, functions as a scaffold in the nucleus for interacting partners such as GTF2I to promote FOS promoter activation. The sequence is that of Melatonin-related receptor (GPR50) from Homo sapiens (Human).